Consider the following 296-residue polypeptide: MYLSLLKSLNRLSPRAWDFIQLTRIDKPIGIYLLLWPTLWAVWIAGKGSPSLKTVFIFVVGVFLMRAAGCVINDFADRKVDGHVKRTEQRPLISGKVSSREALALFAVLVGLSFVLVLFTNATTIWLSFGGLALAACYPFMKRYTYYPQVVLGAAFSWGMPMAFTAETGDLPAAAWLLYIANLLWTVGYDTYYAMVDRDDDLKIGVKSTAVLFGDADRVIILTLQGLALGCLMLAGARFELGACFYIGLLAAAGCFAWEFWSTRQRERDACFKAFLHNHWAGLAIFLGIVADYAVR.

Helical transmembrane passes span 28 to 48 (PIGI…AGKG), 52 to 72 (LKTV…GCVI), 102 to 122 (ALAL…FTNA), 146 to 166 (YYPQ…AFTA), 169 to 189 (GDLP…TVGY), 219 to 239 (VIIL…GARF), 241 to 261 (LGAC…WEFW), and 275 to 295 (FLHN…DYAV).

Belongs to the UbiA prenyltransferase family. Mg(2+) is required as a cofactor.

The protein localises to the cell inner membrane. The enzyme catalyses all-trans-octaprenyl diphosphate + 4-hydroxybenzoate = 4-hydroxy-3-(all-trans-octaprenyl)benzoate + diphosphate. It functions in the pathway cofactor biosynthesis; ubiquinone biosynthesis. In terms of biological role, catalyzes the prenylation of para-hydroxybenzoate (PHB) with an all-trans polyprenyl group. Mediates the second step in the final reaction sequence of ubiquinone-8 (UQ-8) biosynthesis, which is the condensation of the polyisoprenoid side chain with PHB, generating the first membrane-bound Q intermediate 3-octaprenyl-4-hydroxybenzoate. This is 4-hydroxybenzoate octaprenyltransferase from Pseudomonas savastanoi pv. phaseolicola (strain 1448A / Race 6) (Pseudomonas syringae pv. phaseolicola (strain 1448A / Race 6)).